A 341-amino-acid polypeptide reads, in one-letter code: Anthranilate phosphoribosyltransferase (341 aa).

5-phospho-alpha-D-ribose 1-diphosphate contacts are provided by residues glycine 79, 82–83 (GD), threonine 87, 89–92 (NIST), 107–115 (KHGNRAVSS), and serine 119. An anthranilate-binding site is contributed by glycine 79. Residue serine 91 coordinates Mg(2+). Position 110 (asparagine 110) interacts with anthranilate. Anthranilate is bound at residue arginine 165. Aspartate 224 and glutamate 225 together coordinate Mg(2+).

This sequence belongs to the anthranilate phosphoribosyltransferase family. As to quaternary structure, homodimer. It depends on Mg(2+) as a cofactor.

It catalyses the reaction N-(5-phospho-beta-D-ribosyl)anthranilate + diphosphate = 5-phospho-alpha-D-ribose 1-diphosphate + anthranilate. The protein operates within amino-acid biosynthesis; L-tryptophan biosynthesis; L-tryptophan from chorismate: step 2/5. Its function is as follows. Catalyzes the transfer of the phosphoribosyl group of 5-phosphorylribose-1-pyrophosphate (PRPP) to anthranilate to yield N-(5'-phosphoribosyl)-anthranilate (PRA). The protein is Anthranilate phosphoribosyltransferase of Bacillus cereus (strain AH187).